A 196-amino-acid polypeptide reads, in one-letter code: tRNA(Phe) 7-((3-amino-3-carboxypropyl)-4-demethylwyosine(37)-N(4))-methyltransferase 1 (196 aa).

This sequence belongs to the TYW3 family.

It carries out the reaction 4-demethyl-7-[(3S)-3-amino-3-carboxypropyl]wyosine(37) in tRNA(Phe) + S-adenosyl-L-methionine = 7-[(3S)-3-amino-3-carboxypropyl]wyosine(37) in tRNA(Phe) + S-adenosyl-L-homocysteine + H(+). Functionally, S-adenosyl-L-methionine-dependent methyltransferase that acts as a component of the wyosine derivatives biosynthesis pathway. Probably methylates N-4 position of wybutosine-86 to produce wybutosine-72. The chain is tRNA(Phe) 7-((3-amino-3-carboxypropyl)-4-demethylwyosine(37)-N(4))-methyltransferase 1 from Pyrococcus horikoshii (strain ATCC 700860 / DSM 12428 / JCM 9974 / NBRC 100139 / OT-3).